Reading from the N-terminus, the 162-residue chain is Peptidyl-prolyl cis-trans isomerase (162 aa).

One can recognise a PPIase cyclophilin-type domain in the interval 5–161 (FFDVQFGGDA…TTIKIVDSGV (157 aa)).

Belongs to the cyclophilin-type PPIase family. PPIase A subfamily.

It catalyses the reaction [protein]-peptidylproline (omega=180) = [protein]-peptidylproline (omega=0). Its activity is regulated as follows. Binds cyclosporin A (CsA). CsA mediates some of its effects via an inhibitory action on PPIase. In terms of biological role, PPIases accelerate the folding of proteins. It catalyzes the cis-trans isomerization of proline imidic peptide bonds in oligopeptides. In Paramecium primaurelia, this protein is Peptidyl-prolyl cis-trans isomerase.